The sequence spans 252 residues: CLAVATA3/ESR (CLE)-related protein 4A-1 (252 aa).

The N-terminal stretch at 1–21 (MAKNAMLCLLILRVVLALAFA) is a signal peptide. The segment at 21 to 83 (ATNKKGDEEP…SNQLPNNNWM (63 aa)) is required for secretion from the host cytoplasm to the host apoplasm. A glycan (N-linked (GlcNAc...) asparagine) is linked at Asn-32. A disordered region spans residues 116–252 (RKTGMHSQRH…APAGPDPIHH (137 aa)). 2 stretches are compositionally biased toward basic and acidic residues: residues 125-137 (HHEETTLEQEKRV) and 144-242 (PIHH…EKRG). An A-1 repeat occupies 127–135 (EETTLEQEK). Positions 127 to 219 (EETTLEQEKR…HEETTLEQEK (93 aa)) are 6 X approximate repeat A. The stretch at 136–147 (RVAGAGPDPIHH) is one CLE-1 repeat. Residues 136–252 (RVAGAGPDPI…APAGPDPIHH (117 aa)) are 6 X approximate repeat CLE. Residues 148 to 156 (QDTTLEQEK) form an A-2 repeat. The CLE-2 repeat unit spans residues 157–168 (RAVPAGPDPKHH). One copy of the A-3 repeat lies at 169 to 177 (EETTLEQEK). Residues 178–189 (RAVPAGPDPKHH) form a CLE-3 repeat. One copy of the A-4 repeat lies at 190-198 (EETTLEQEK). One copy of the CLE-4 repeat lies at 199–210 (RAVPAGPDPKHH). The A-5 repeat unit spans residues 211–219 (EETTLEQEK). Residues 220-231 (RAVPAGPDPKHH) form a CLE-5 repeat. The stretch at 232 to 240 (EETTFEQEK) is one A-6 repeat. Residues 241–252 (RGAPAGPDPIHH) form a CLE-6 repeat.

This sequence belongs to the CLV3/ESR signal peptide family. Highly expressed exclusively within the dorsal esophageal gland cell during syncytium formation in host plants.

Its subcellular location is the secreted. It is found in the host cytoplasm. The protein localises to the host extracellular space. The protein resides in the extracellular space. It localises to the apoplast. Functionally, mimics host plant CLE extracellular signal peptides that regulate cell fate. May play a role in the differentiation or division of feeding cells (syncytia) induced in plant roots during infection. This chain is CLAVATA3/ESR (CLE)-related protein 4A-1 (CLE-4A-1), found in Globodera rostochiensis (Golden nematode worm).